Here is an 81-residue protein sequence, read N- to C-terminus: Photosystem I iron-sulfur center (81 aa).

4Fe-4S ferredoxin-type domains follow at residues 2–31 and 37–68; these read SHAVKIYDTCIGCTQCVRACPLDVLEMVPW and GQIASSPRTEDCVGCKRCETACPTDFLSIRVY. Cys-11, Cys-14, Cys-17, Cys-21, Cys-48, Cys-51, Cys-54, and Cys-58 together coordinate [4Fe-4S] cluster.

In terms of assembly, the cyanobacterial PSI reaction center is composed of one copy each of PsaA,B,C,D,E,F,I,J,K,L,M and X, and forms trimeric complexes. The cofactor is [4Fe-4S] cluster.

It localises to the cellular thylakoid membrane. It carries out the reaction reduced [plastocyanin] + hnu + oxidized [2Fe-2S]-[ferredoxin] = oxidized [plastocyanin] + reduced [2Fe-2S]-[ferredoxin]. Functionally, apoprotein for the two 4Fe-4S centers FA and FB of photosystem I (PSI); essential for photochemical activity. FB is the terminal electron acceptor of PSI, donating electrons to ferredoxin. The C-terminus interacts with PsaA/B/D and helps assemble the protein into the PSI complex. Required for binding of PsaD and PsaE to PSI. PSI is a plastocyanin/cytochrome c6-ferredoxin oxidoreductase, converting photonic excitation into a charge separation, which transfers an electron from the donor P700 chlorophyll pair to the spectroscopically characterized acceptors A0, A1, FX, FA and FB in turn. The protein is Photosystem I iron-sulfur center of Synechococcus sp. (strain WH8103).